Reading from the N-terminus, the 794-residue chain is Zinc finger protein 148 (794 aa).

Residue lysine 6 forms a Glycyl lysine isopeptide (Lys-Gly) (interchain with G-Cter in SUMO2) linkage. Position 51 is a phosphoserine (serine 51). Glycyl lysine isopeptide (Lys-Gly) (interchain with G-Cter in SUMO2) cross-links involve residues lysine 88, lysine 115, and lysine 132. The C2H2-type 1 zinc-finger motif lies at 171 to 193 (HVCEHCNAAFRTNYHLQRHVFIH). Threonine 194 carries the phosphothreonine modification. C2H2-type zinc fingers lie at residues 199–221 (FQCS…EKIH) and 227–249 (FRCD…KRTH). Serine 250 is subject to Phosphoserine. The C2H2-type 4 zinc-finger motif lies at 255–278 (YQCEYCLQYFSRTDRVLKHKRMCH). Lysine 291 is covalently cross-linked (Glycyl lysine isopeptide (Lys-Gly) (interchain with G-Cter in SUMO2)). Positions 298–338 (EEDSGFSTSPKDNSLPKKKRQKTEKKSSGMDKESSLDKSDL) are disordered. Residues serine 301 and serine 306 each carry the phosphoserine modification. Lysine 308 is covalently cross-linked (Glycyl lysine isopeptide (Lys-Gly) (interchain with G-Cter in SUMO2)). Basic and acidic residues predominate over residues 321-338 (EKKSSGMDKESSLDKSDL). Residue lysine 356 forms a Glycyl lysine isopeptide (Lys-Gly) (interchain with G-Cter in SUMO1); alternate linkage. Lysine 356 participates in a covalent cross-link: Glycyl lysine isopeptide (Lys-Gly) (interchain with G-Cter in SUMO2); alternate. A Glycyl lysine isopeptide (Lys-Gly) (interchain with G-Cter in SUMO2) cross-link involves residue lysine 402. Serine 412 carries the post-translational modification Phosphoserine. Glycyl lysine isopeptide (Lys-Gly) (interchain with G-Cter in SUMO2) cross-links involve residues lysine 421 and lysine 424. Residues 575–588 (SSEVPEVTQSENVG) are compositionally biased toward polar residues. The tract at residues 575–596 (SSEVPEVTQSENVGSSSQASSS) is disordered. Lysine 607 carries the post-translational modification N6-acetyllysine. Serine 665 and serine 784 each carry phosphoserine. The segment at 775-794 (NDNRAGMTSSPDATTGQTFG) is disordered.

This sequence belongs to the krueppel C2H2-type zinc-finger protein family. As to quaternary structure, interacts with HNRNPDL. Interacts with the 5FMC complex; the interaction requires association with CHTOP. Interacts with CAVIN1. Post-translationally, sumoylated with SUMO2. Desumoylated by SENP3, resulting in the stimulation of transcription of its target genes.

The protein localises to the nucleus. In terms of biological role, involved in transcriptional regulation. Represses the transcription of a number of genes including gastrin, stromelysin and enolase. Binds to the G-rich box in the enhancer region of these genes. The chain is Zinc finger protein 148 (ZNF148) from Bos taurus (Bovine).